Reading from the N-terminus, the 223-residue chain is UPF0441 protein KPK_0672 (223 aa).

The tract at residues 165–223 is disordered; sequence SYGAAQPGRTMNVPKTAMAPKPATTTTVTRGGFGESVAKQSTMQRSAAGSTSSSRSMGG. Low complexity-rich tracts occupy residues 177-193 and 209-223; these read VPKT…TTVT and RSAA…SMGG.

The protein belongs to the UPF0441 family.

This is UPF0441 protein KPK_0672 from Klebsiella pneumoniae (strain 342).